We begin with the raw amino-acid sequence, 299 residues long: DNA-binding transcriptional activator HetR (299 aa).

S152 is an active-site residue.

It belongs to the peptidase S48 family. In terms of assembly, homodimer; disulfide-linked.

Its function is as follows. Controls heterocyst differentiation. Dimerization is required for DNA-binding. Has both a protease and a DNA-binding activity. Increased expression leads to more heterocysts than usual. The polypeptide is DNA-binding transcriptional activator HetR (Nostoc punctiforme (strain ATCC 29133 / PCC 73102)).